The following is a 180-amino-acid chain: MSRIGKAPVIFDNTVQVSVSPANEVVVKGAKSSLTIGMKPNVSAKIDGNKVVLTPNDDTKESRAMHGLYRALIQNAVTGVTKGFSRGLELQGVGYRANVAGKKLELSLGFSHPVIFDIPEGIEIKVEKQTSLTVNGPSKELVGQVAAKIRSFRPPEPYLGKGVRYAGEQIRRKAGKSAGK.

This sequence belongs to the universal ribosomal protein uL6 family. As to quaternary structure, part of the 50S ribosomal subunit.

Functionally, this protein binds to the 23S rRNA, and is important in its secondary structure. It is located near the subunit interface in the base of the L7/L12 stalk, and near the tRNA binding site of the peptidyltransferase center. The chain is Large ribosomal subunit protein uL6 from Bdellovibrio bacteriovorus (strain ATCC 15356 / DSM 50701 / NCIMB 9529 / HD100).